A 207-amino-acid chain; its full sequence is Claudin-11 (207 aa).

Position 1 (Met1) is a topological domain, cytoplasmic. A helical membrane pass occupies residues Val2–Ile22. Topologically, residues Val23–Arg82 are extracellular. A helical transmembrane segment spans residues Ala83–Leu103. The Cytoplasmic portion of the chain corresponds to Pro104 to Leu122. Residues Ala123 to Val143 form a helical membrane-spanning segment. At Cys144–Ser157 the chain is on the extracellular side. Residues Leu158–Cys178 form a helical membrane-spanning segment. Over Ala179–Val207 the chain is Cytoplasmic. 4 positions are modified to phosphoserine: Ser193, Ser194, Ser197, and Ser198.

Belongs to the claudin family. Interacts with tetraspanin-3/TSPAN3. Interacts with OCLN.

It is found in the cell junction. Its subcellular location is the tight junction. It localises to the cell membrane. Functionally, plays a major role in tight junction-specific obliteration of the intercellular space, through calcium-independent cell-adhesion activity. The chain is Claudin-11 (CLDN11) from Macaca fascicularis (Crab-eating macaque).